The primary structure comprises 245 residues: tRNA (guanine-N(1)-)-methyltransferase (245 aa).

S-adenosyl-L-methionine contacts are provided by residues glycine 111 and 131 to 136; that span reads IGDYVL.

This sequence belongs to the RNA methyltransferase TrmD family. In terms of assembly, homodimer.

The protein resides in the cytoplasm. It catalyses the reaction guanosine(37) in tRNA + S-adenosyl-L-methionine = N(1)-methylguanosine(37) in tRNA + S-adenosyl-L-homocysteine + H(+). In terms of biological role, specifically methylates guanosine-37 in various tRNAs. The sequence is that of tRNA (guanine-N(1)-)-methyltransferase from Staphylococcus haemolyticus (strain JCSC1435).